Reading from the N-terminus, the 201-residue chain is Protease (201 aa).

Residues His56, Asp73, and Cys121 contribute to the active site.

The protein belongs to the peptidase C5 family. Interacts with protease cofactor pVI-C; this interaction is necessary for protease activation.

The protein localises to the virion. Its subcellular location is the host nucleus. It carries out the reaction Cleaves proteins of the adenovirus and its host cell at two consensus sites: -Yaa-Xaa-Gly-Gly-|-Xaa- and -Yaa-Xaa-Gly-Xaa-|-Gly- (in which Yaa is Met, Ile or Leu, and Xaa is any amino acid).. With respect to regulation, requires DNA and protease cofactor for maximal activation. Inside nascent virions, becomes partially activated by binding to the viral DNA, allowing it to cleave the cofactor that binds to the protease and fully activates it. Actin, like the viral protease cofactor, seems to act as a cofactor in the cleavage of cytokeratin 18 and of actin itself. Functionally, cleaves viral precursor proteins (pTP, pIIIa, pVI, pVII, pVIII, and pX) inside newly assembled particles giving rise to mature virions. Protease complexed to its cofactor slides along the viral DNA to specifically locate and cleave the viral precursors. Mature virions have a weakened organization compared to the unmature virions, thereby facilitating subsequent uncoating. Without maturation, the particle lacks infectivity and is unable to uncoat. Late in adenovirus infection, in the cytoplasm, may participate in the cytoskeleton destruction. Cleaves host cell cytoskeletal keratins K7 and K18. The polypeptide is Protease (Homo sapiens (Human)).